A 293-amino-acid chain; its full sequence is tRNA pseudouridine synthase B (293 aa).

The Nucleophile role is filled by aspartate 38.

The protein belongs to the pseudouridine synthase TruB family. Type 1 subfamily.

The catalysed reaction is uridine(55) in tRNA = pseudouridine(55) in tRNA. Responsible for synthesis of pseudouridine from uracil-55 in the psi GC loop of transfer RNAs. The protein is tRNA pseudouridine synthase B of Nostoc sp. (strain PCC 7120 / SAG 25.82 / UTEX 2576).